The following is a 258-amino-acid chain: Large ribosomal subunit protein uL3 (258 aa).

This sequence belongs to the universal ribosomal protein uL3 family. In terms of assembly, part of the 50S ribosomal subunit. Forms a cluster with proteins L14 and L19.

In terms of biological role, one of the primary rRNA binding proteins, it binds directly near the 3'-end of the 23S rRNA, where it nucleates assembly of the 50S subunit. The chain is Large ribosomal subunit protein uL3 from Spiroplasma kunkelii.